The following is a 100-amino-acid chain: NADH-quinone oxidoreductase subunit K (100 aa).

Transmembrane regions (helical) follow at residues 4–24 (LQHG…GLII), 29–49 (LFML…FVVV), and 60–80 (VMFI…LALL).

This sequence belongs to the complex I subunit 4L family. As to quaternary structure, NDH-1 is composed of 13 different subunits. Subunits NuoA, H, J, K, L, M, N constitute the membrane sector of the complex.

It localises to the cell inner membrane. It catalyses the reaction a quinone + NADH + 5 H(+)(in) = a quinol + NAD(+) + 4 H(+)(out). Its function is as follows. NDH-1 shuttles electrons from NADH, via FMN and iron-sulfur (Fe-S) centers, to quinones in the respiratory chain. The immediate electron acceptor for the enzyme in this species is believed to be ubiquinone. Couples the redox reaction to proton translocation (for every two electrons transferred, four hydrogen ions are translocated across the cytoplasmic membrane), and thus conserves the redox energy in a proton gradient. The polypeptide is NADH-quinone oxidoreductase subunit K (Photorhabdus laumondii subsp. laumondii (strain DSM 15139 / CIP 105565 / TT01) (Photorhabdus luminescens subsp. laumondii)).